The primary structure comprises 624 residues: D-3-phosphoglycerate dehydrogenase 2, chloroplastic (624 aa).

A chloroplast-targeting transit peptide spans Met1 to Ser49. Ser71 bears the Phosphoserine mark. Residues Lys231–Val232, Asp251, Val310–Arg312, and Asp336 contribute to the NAD(+) site. Arg312 is a catalytic residue. Residue Glu341 is part of the active site. Residue His360 is the Proton donor of the active site. His360–Ala363 contributes to the NAD(+) binding site. An ACT domain is found at Leu552 to Leu624.

Belongs to the D-isomer specific 2-hydroxyacid dehydrogenase family. In terms of tissue distribution, ubiquitous, but highly expressed in roots and in dark-grown leaf tissues. Expressed in the vasculature, stigma, anther filaments and shoot apical meristem. Not detected in the root meristem or in embryo.

Its subcellular location is the plastid. The protein resides in the chloroplast. It carries out the reaction (2R)-3-phosphoglycerate + NAD(+) = 3-phosphooxypyruvate + NADH + H(+). It functions in the pathway amino-acid biosynthesis; L-serine biosynthesis; L-serine from 3-phospho-D-glycerate: step 1/3. Its activity is regulated as follows. Inhibited by 90 uM 3-phosphonooxypyruvate, but not by Ser, Thr, Val, Gly Trp, O-acetyl-L-Ser and Cys. In terms of biological role, involved in the plastidial phosphorylated pathway of serine biosynthesis (PPSB). This is D-3-phosphoglycerate dehydrogenase 2, chloroplastic (PGDH2) from Arabidopsis thaliana (Mouse-ear cress).